The chain runs to 101 residues: Urease subunit beta (101 aa).

The protein belongs to the urease beta subunit family. In terms of assembly, heterotrimer of UreA (gamma), UreB (beta) and UreC (alpha) subunits. Three heterotrimers associate to form the active enzyme.

The protein localises to the cytoplasm. It catalyses the reaction urea + 2 H2O + H(+) = hydrogencarbonate + 2 NH4(+). It functions in the pathway nitrogen metabolism; urea degradation; CO(2) and NH(3) from urea (urease route): step 1/1. This Burkholderia ambifaria (strain ATCC BAA-244 / DSM 16087 / CCUG 44356 / LMG 19182 / AMMD) (Burkholderia cepacia (strain AMMD)) protein is Urease subunit beta.